A 189-amino-acid chain; its full sequence is Putative manganese efflux pump MntP (189 aa).

Helical transmembrane passes span 3–23 (LSAT…ASIG), 41–61 (LIFG…GLFA), 65–85 (IMEW…MRMI), 103–123 (GFWL…AIGV), 132–152 (IVHT…LGMM), and 167–187 (ILGG…HLGY).

The protein belongs to the MntP (TC 9.B.29) family.

It localises to the cell inner membrane. Its function is as follows. Probably functions as a manganese efflux pump. In Serratia proteamaculans (strain 568), this protein is Putative manganese efflux pump MntP.